Reading from the N-terminus, the 311-residue chain is Malate dehydrogenase (311 aa).

Residues glycine 7–glycine 13 and aspartate 34 contribute to the NAD(+) site. Substrate-binding residues include arginine 81 and arginine 87. Residues asparagine 94 and isoleucine 117–asparagine 119 each bind NAD(+). Residues asparagine 119 and arginine 153 each contribute to the substrate site. Histidine 177 serves as the catalytic Proton acceptor. An NAD(+)-binding site is contributed by methionine 227.

The protein belongs to the LDH/MDH superfamily. MDH type 1 family. In terms of assembly, homodimer.

The enzyme catalyses (S)-malate + NAD(+) = oxaloacetate + NADH + H(+). Functionally, catalyzes the reversible oxidation of malate to oxaloacetate. This chain is Malate dehydrogenase, found in Aliivibrio fischeri (strain ATCC 700601 / ES114) (Vibrio fischeri).